Reading from the N-terminus, the 295-residue chain is Bifunctional protein FolD (295 aa).

NADP(+) is bound by residues 166-168 (GRS), Ser191, and Ile232.

This sequence belongs to the tetrahydrofolate dehydrogenase/cyclohydrolase family. Homodimer.

The catalysed reaction is (6R)-5,10-methylene-5,6,7,8-tetrahydrofolate + NADP(+) = (6R)-5,10-methenyltetrahydrofolate + NADPH. It carries out the reaction (6R)-5,10-methenyltetrahydrofolate + H2O = (6R)-10-formyltetrahydrofolate + H(+). It participates in one-carbon metabolism; tetrahydrofolate interconversion. Functionally, catalyzes the oxidation of 5,10-methylenetetrahydrofolate to 5,10-methenyltetrahydrofolate and then the hydrolysis of 5,10-methenyltetrahydrofolate to 10-formyltetrahydrofolate. This chain is Bifunctional protein FolD, found in Rhodopseudomonas palustris (strain HaA2).